A 555-amino-acid polypeptide reads, in one-letter code: Dihydroxy-acid dehydratase (555 aa).

Position 78 (aspartate 78) interacts with Mg(2+). Residue cysteine 119 participates in [2Fe-2S] cluster binding. Residues aspartate 120 and lysine 121 each contribute to the Mg(2+) site. Residue lysine 121 is modified to N6-carboxylysine. Cysteine 192 contacts [2Fe-2S] cluster. Mg(2+) is bound at residue glutamate 444. Serine 470 functions as the Proton acceptor in the catalytic mechanism.

It belongs to the IlvD/Edd family. Homodimer. It depends on [2Fe-2S] cluster as a cofactor. Mg(2+) is required as a cofactor.

It catalyses the reaction (2R)-2,3-dihydroxy-3-methylbutanoate = 3-methyl-2-oxobutanoate + H2O. It carries out the reaction (2R,3R)-2,3-dihydroxy-3-methylpentanoate = (S)-3-methyl-2-oxopentanoate + H2O. Its pathway is amino-acid biosynthesis; L-isoleucine biosynthesis; L-isoleucine from 2-oxobutanoate: step 3/4. It functions in the pathway amino-acid biosynthesis; L-valine biosynthesis; L-valine from pyruvate: step 3/4. In terms of biological role, functions in the biosynthesis of branched-chain amino acids. Catalyzes the dehydration of (2R,3R)-2,3-dihydroxy-3-methylpentanoate (2,3-dihydroxy-3-methylvalerate) into 2-oxo-3-methylpentanoate (2-oxo-3-methylvalerate) and of (2R)-2,3-dihydroxy-3-methylbutanoate (2,3-dihydroxyisovalerate) into 2-oxo-3-methylbutanoate (2-oxoisovalerate), the penultimate precursor to L-isoleucine and L-valine, respectively. This Halalkalibacterium halodurans (strain ATCC BAA-125 / DSM 18197 / FERM 7344 / JCM 9153 / C-125) (Bacillus halodurans) protein is Dihydroxy-acid dehydratase.